The primary structure comprises 190 residues: Apolipoprotein M (190 aa).

The N-terminal stretch at M1–F17 is a signal peptide. Cystine bridges form between C23–C169, C95–C185, and C130–C159. 2 residues coordinate tetradecanoate: E138 and R145.

The protein belongs to the calycin superfamily. Lipocalin family. Highly divergent. As to quaternary structure, interacts with LRP2; LRP2 mediates APOM renal uptake and subsequent lysosomal degradation. As to expression, expressed by the liver; secreted in plasma.

The protein localises to the secreted. Probably involved in lipid transport. Can bind sphingosine-1-phosphate, myristic acid, palmitic acid and stearic acid, retinol, all-trans-retinoic acid and 9-cis-retinoic acid. The sequence is that of Apolipoprotein M (Apom) from Rattus norvegicus (Rat).